The primary structure comprises 298 residues: Dihydrodipicolinate reductase-like protein CRR1, chloroplastic (298 aa).

The N-terminal 25 residues, 1 to 25 (MAAVNCHFFQLSRHLKPSRPSFSCS), are a transit peptide targeting the chloroplast. 160 to 163 (APTL) contributes to the NAD(+) binding site.

Belongs to the DapB family. As to expression, expressed specifically in leaves.

The protein localises to the plastid. Its subcellular location is the chloroplast stroma. Functionally, dihydrodipicolinate reductase (DHPR)-like protein that may not function as DHPR in lysine biosynthesis. Required for both formation and activity of the chloroplast NAD(P)H dehydrogenase (NDH) complex of the photosynthetic electron transport chain. May function in assembly or stabilization of the NDH complex. The protein is Dihydrodipicolinate reductase-like protein CRR1, chloroplastic of Arabidopsis thaliana (Mouse-ear cress).